The chain runs to 462 residues: Malonyl-coenzyme:anthocyanin 5-O-glucoside-6'''-O-malonyltransferase (462 aa).

Residues His-167 and Asp-390 each act as proton acceptor in the active site.

This sequence belongs to the plant acyltransferase family. Detected in petals and sepals, and at lower levels in bracts and red stems.

It catalyses the reaction pelargonidin 3-O-(6-O-[(E)-caffeoyl]-beta-D-glucoside) 5-O-beta-D-glucoside + malonyl-CoA = 4'''-demalonylsalvianin + CoA. It functions in the pathway pigment biosynthesis; anthocyanin biosynthesis. Its activity is regulated as follows. Completely inhibited by 10 mM p-coumaric acid, this inhibition is rapid, reversible and non-competitive. Completely inhibited by 0.1 mM Cu(2+), 0.1 mM Hg(2+) and 10 mM caffeic acid. Partially inhibited by 5 mM N-ethylmaleimide, 1 mM diethylpyrocarbonate and 1 mM acetyl-CoA. Functionally, catalyzes the transfer of a malonyl group from malonyl-CoA to the 6'''-hydroxyl group of the 5-glucosyl moiety of anthocyanins. Active towards bisdemalonylsalvianin (pelargonidin 3-O-(6-caffeoyl-beta-D-glucoside) 5-O-beta-D-glucoside) and shisonin, but not towards nodemalonylsalvianin, salvianin, pelargonidin 3,5-diglucoside and delphinidin 3,5-diglucoside. The protein is Malonyl-coenzyme:anthocyanin 5-O-glucoside-6'''-O-malonyltransferase of Salvia splendens (Scarlet sage).